The chain runs to 687 residues: A-kinase anchor protein 8 (687 aa).

The interaction with MCM2 stretch occupies residues 1–195 (MEQGYGGYGA…FLRGRGQGRF (195 aa)). The interval 1 to 210 (MEQGYGGYGA…SSTFIRSDPF (210 aa)) is interaction with DPY30. Ser-72 bears the Phosphoserine mark. 2 disordered regions span residues 105-124 (KEGG…DRDS) and 185-218 (GFLR…ASEP). Arg-109 is subject to Asymmetric dimethylarginine; alternate. Arg-109 is subject to Omega-N-methylarginine; alternate. Positions 109-118 (RGGISSGGEG) are enriched in gly residues. Positions 109–201 (RGGISSGGEG…QGRFQDRSNS (93 aa)) are interaction with DDX5. A Phosphoserine modification is found at Ser-199. Omega-N-methylarginine is present on residues Arg-232 and Arg-276. The interval 277–379 (SQTRIRDWPR…KQRRRDRMRD (103 aa)) is disordered. Composition is skewed to basic and acidic residues over residues 280-294 (RIRD…ERFG) and 311-320 (PDAKLARADS). A Bipartite nuclear localization signal motif is present at residues 286 to 303 (RRRGFERFGPDNMGRKRK). Lys-314 is covalently cross-linked (Glycyl lysine isopeptide (Lys-Gly) (interchain with G-Cter in SUMO2)). 3 positions are modified to phosphoserine: Ser-320, Ser-325, and Ser-336. Residues 321-331 (DGDLSENDDGA) are compositionally biased toward acidic residues. Residues 335 to 357 (RSGDEEFRGEDDLCDSRKQRGEK) show a composition bias toward basic and acidic residues. The involved in chromatin-binding stretch occupies residues 384–447 (RIQFACSVCK…NKKIEKRRQE (64 aa)). 2 consecutive C2H2 AKAP95-type zinc fingers follow at residues 389–411 (CSVC…SKFH) and 478–501 (CLAC…SVDH). Residues 522 to 565 (SVLNNKHIVKMLEKYLKGEDPFVNETADLETEGDENVGEEKEET) form an involved in condensin complex recruitment region. A Phosphothreonine modification is found at Thr-552. Residues 568 to 585 (EVAAEVLAEVITAAVKAV) are RII-binding. Residues 572 to 589 (EVLAEVITAAVKAVEGEG) are required for interaction with MYCBP. The interval 624 to 659 (QTCEAASETRSIEDKTRGEAAEARNEAAMPTADAGS) is disordered. A compositionally biased stretch (basic and acidic residues) spans 633 to 648 (RSIEDKTRGEAAEARN). Ser-659 bears the Phosphoserine mark.

It belongs to the AKAP95 family. Binds to the PKA RII-alpha regulatory subunit PRKAR2A. Interacts (via C-terminus) with FIGN. Interacts with NCAPD2, CCND3, CCNE1, MCM2, RPS6KA1, DDX5, PDE4A. Interacts with MYCBP; MYCBP is translocated to the nucleus and the interaction prevents the association of the PKA catalytic subunit leading to suppression of PKA activity. Interacts with CCND1, CASP3. Interacts with NFKB1; detetcted in the cytoplasm. Interacts with DPY30; mediating AKAP8 association with at least the MLL4/WBP7 HMT complex. Interacts with HDAC3; increased during mitosis. Interacts with GJA1; in the nucleus and in the nuclear membrane; the nuclear association increases with progress of cell cycle G1, S and G2 phase and decreases in M phase. In terms of processing, phosphorylated on tyrosine residues probably by SRC subfamily protein kinases; multiple phosphorylation is leading to dissociation from nuclear structures implicated in chromatin structural changes.

The protein resides in the nucleus matrix. The protein localises to the nucleus. It localises to the nucleolus. Its subcellular location is the cytoplasm. In terms of biological role, anchoring protein that mediates the subcellular compartmentation of cAMP-dependent protein kinase (PKA type II). Acts as an anchor for a PKA-signaling complex onto mitotic chromosomes, which is required for maintenance of chromosomes in a condensed form throughout mitosis. Recruits condensin complex subunit NCAPD2 to chromosomes required for chromatin condensation; the function appears to be independent from PKA-anchoring. Specifically involved in recruitment of CAPD2 to, and condensation of maternal but not paternal chromosomes. May help to deliver cyclin D/E to CDK4 to facilitate cell cycle progression. Required for cell cycle G2/M transition and histone deacetylation during mitosis. In mitotic cells recruits HDAC3 to the vicinity of chromatin leading to deacetylation and subsequent phosphorylation at 'Ser-10' of histone H3; in this function may act redundantly with AKAP8L. Involved in nuclear retention of RPS6KA1 upon ERK activation thus inducing cell proliferation. May be involved in regulation of DNA replication by acting as scaffold for MCM2. Enhances HMT activity of the KMT2 family MLL4/WBP7 complex and is involved in transcriptional regulation. In a teratocarcinoma cell line is involved in retinoic acid-mediated induction of developmental genes implicating H3 'Lys-4' methylation. May be involved in recruitment of active CASP3 to the nucleus in apoptotic cells. May act as a carrier protein of GJA1 for its transport to the nucleus. May play a repressive role in the regulation of rDNA transcription. Preferentially binds GC-rich DNA in vitro. In cells, associates with ribosomal RNA (rRNA) chromatin, preferentially with rRNA promoter and transcribed regions. Involved in modulation of Toll-like receptor signaling. Required for the cAMP-dependent suppression of TNF-alpha in early stages of LPS-induced macrophage activation; the function probably implicates targeting of PKA to NFKB1. The sequence is that of A-kinase anchor protein 8 (Akap8) from Mus musculus (Mouse).